The sequence spans 272 residues: NH(3)-dependent NAD(+) synthetase (272 aa).

Tyr33 serves as a coordination point for deamido-NAD(+). ATP is bound by residues 45–52 (GISGGQDS), Arg79, and Gln85. Residue Asp51 participates in Mg(2+) binding. Arg138 contacts deamido-NAD(+). ATP is bound at residue Thr158. Glu163 is a binding site for Mg(2+). Positions 171 and 178 each coordinate deamido-NAD(+). Residues Lys187 and Thr209 each coordinate ATP. Residues Glu224 and 258–259 (HK) contribute to the deamido-NAD(+) site.

Belongs to the NAD synthetase family. In terms of assembly, homodimer. Phosphorylated during sporulation.

It catalyses the reaction deamido-NAD(+) + NH4(+) + ATP = AMP + diphosphate + NAD(+) + H(+). It functions in the pathway cofactor biosynthesis; NAD(+) biosynthesis; NAD(+) from deamido-NAD(+) (ammonia route): step 1/1. Its function is as follows. Catalyzes the ATP-dependent amidation of deamido-NAD to form NAD. Uses ammonia as a nitrogen source. The sequence is that of NH(3)-dependent NAD(+) synthetase from Bacillus subtilis (strain 168).